Here is a 955-residue protein sequence, read N- to C-terminus: Auxin response factor 11 (955 aa).

The TF-B3 DNA-binding region spans 143–245 (FCKNLTASDT…QLLLGVRRAT (103 aa)). Residues 518–543 (ESKLNATSRDPRNTDSYTSRSTSEQN) show a composition bias toward polar residues. Disordered stretches follow at residues 518-573 (ESKL…LSSA) and 609-646 (TQGN…KSVN). Over residues 551–560 (KTRRSKKGLP) the composition is skewed to basic residues. In terms of domain architecture, PB1 spans 852-936 (RTYTKVQKQG…RCIRILSPSE (85 aa)).

The protein belongs to the ARF family. In terms of assembly, homodimers and heterodimers.

It is found in the nucleus. In terms of biological role, auxin response factors (ARFs) are transcriptional factors that bind specifically to the DNA sequence 5'-TGTCTC-3' found in the auxin-responsive promoter elements (AuxREs). The polypeptide is Auxin response factor 11 (ARF11) (Oryza sativa subsp. indica (Rice)).